The primary structure comprises 61 residues: Small ribosomal subunit protein uS14 (61 aa).

Residues C24, C27, C40, and C43 each contribute to the Zn(2+) site.

Belongs to the universal ribosomal protein uS14 family. Zinc-binding uS14 subfamily. In terms of assembly, part of the 30S ribosomal subunit. Contacts proteins S3 and S10. Zn(2+) serves as cofactor.

In terms of biological role, binds 16S rRNA, required for the assembly of 30S particles and may also be responsible for determining the conformation of the 16S rRNA at the A site. This Thermobifida fusca (strain YX) protein is Small ribosomal subunit protein uS14.